We begin with the raw amino-acid sequence, 73 residues long: Disintegrin molossin (73 aa).

A Disintegrin domain is found at 1-73; it reads EAGIECDCGS…ADCPRNRFHA (73 aa). Cystine bridges form between Cys-6–Cys-21, Cys-8–Cys-16, Cys-15–Cys-38, Cys-29–Cys-35, Cys-34–Cys-59, and Cys-47–Cys-66. The Cell attachment site motif lies at 51-53; the sequence is RGD.

It belongs to the venom metalloproteinase (M12B) family. P-II subfamily. P-IIa sub-subfamily. As to quaternary structure, monomer (disintegrin). As to expression, expressed by the venom gland.

It is found in the secreted. Inhibits fibrinogen interaction with platelets. Acts by binding to alpha-IIb/beta-3 (ITGA2B/ITGB3) on the platelet surface and inhibits aggregation induced by ADP, thrombin, platelet-activating factor and collagen. The protein is Disintegrin molossin of Crotalus molossus molossus (Northern black-tailed rattlesnake).